A 595-amino-acid polypeptide reads, in one-letter code: Elongation factor 4 (595 aa).

Positions 2-184 (KNIRNFSIIA…QIVEKIPAPK (183 aa)) constitute a tr-type G domain. GTP is bound by residues 14–19 (DHGKST) and 131–134 (NKID).

Belongs to the TRAFAC class translation factor GTPase superfamily. Classic translation factor GTPase family. LepA subfamily.

The protein localises to the cell inner membrane. It carries out the reaction GTP + H2O = GDP + phosphate + H(+). Functionally, required for accurate and efficient protein synthesis under certain stress conditions. May act as a fidelity factor of the translation reaction, by catalyzing a one-codon backward translocation of tRNAs on improperly translocated ribosomes. Back-translocation proceeds from a post-translocation (POST) complex to a pre-translocation (PRE) complex, thus giving elongation factor G a second chance to translocate the tRNAs correctly. Binds to ribosomes in a GTP-dependent manner. The sequence is that of Elongation factor 4 from Ruthia magnifica subsp. Calyptogena magnifica.